A 456-amino-acid chain; its full sequence is Bifunctional protein GlmU (456 aa).

Residues 1 to 229 (MTKKALSAVI…VMEVEGANNR (229 aa)) form a pyrophosphorylase region. Residues 11–14 (LAAG), Lys-25, Gln-76, 81–82 (GT), 103–105 (YGD), Gly-140, Glu-154, Asn-169, and Asn-227 contribute to the UDP-N-acetyl-alpha-D-glucosamine site. Asp-105 lines the Mg(2+) pocket. Asn-227 contacts Mg(2+). The linker stretch occupies residues 230-250 (LQLAALERYFQNKQASKLLLE). An N-acetyltransferase region spans residues 251 to 456 (GVMIYDPARF…QGWQRPIKKK (206 aa)). UDP-N-acetyl-alpha-D-glucosamine contacts are provided by Arg-333 and Lys-351. The active-site Proton acceptor is the His-363. Tyr-366 and Asn-377 together coordinate UDP-N-acetyl-alpha-D-glucosamine. Acetyl-CoA contacts are provided by residues Ala-380, 386-387 (NY), Ser-405, Ala-423, and Arg-440.

It in the N-terminal section; belongs to the N-acetylglucosamine-1-phosphate uridyltransferase family. The protein in the C-terminal section; belongs to the transferase hexapeptide repeat family. In terms of assembly, homotrimer. The cofactor is Mg(2+).

The protein localises to the cytoplasm. The catalysed reaction is alpha-D-glucosamine 1-phosphate + acetyl-CoA = N-acetyl-alpha-D-glucosamine 1-phosphate + CoA + H(+). It catalyses the reaction N-acetyl-alpha-D-glucosamine 1-phosphate + UTP + H(+) = UDP-N-acetyl-alpha-D-glucosamine + diphosphate. The protein operates within nucleotide-sugar biosynthesis; UDP-N-acetyl-alpha-D-glucosamine biosynthesis; N-acetyl-alpha-D-glucosamine 1-phosphate from alpha-D-glucosamine 6-phosphate (route II): step 2/2. It participates in nucleotide-sugar biosynthesis; UDP-N-acetyl-alpha-D-glucosamine biosynthesis; UDP-N-acetyl-alpha-D-glucosamine from N-acetyl-alpha-D-glucosamine 1-phosphate: step 1/1. Its pathway is bacterial outer membrane biogenesis; LPS lipid A biosynthesis. Catalyzes the last two sequential reactions in the de novo biosynthetic pathway for UDP-N-acetylglucosamine (UDP-GlcNAc). The C-terminal domain catalyzes the transfer of acetyl group from acetyl coenzyme A to glucosamine-1-phosphate (GlcN-1-P) to produce N-acetylglucosamine-1-phosphate (GlcNAc-1-P), which is converted into UDP-GlcNAc by the transfer of uridine 5-monophosphate (from uridine 5-triphosphate), a reaction catalyzed by the N-terminal domain. This is Bifunctional protein GlmU from Haemophilus influenzae (strain 86-028NP).